The primary structure comprises 101 residues: uncharacterized protein (101 aa).

The next 2 membrane-spanning stretches (helical) occupy residues I3–F23 and A39–F59.

Its subcellular location is the membrane. This is an uncharacterized protein from Saccharomyces cerevisiae (strain ATCC 204508 / S288c) (Baker's yeast).